We begin with the raw amino-acid sequence, 632 residues long: DNA gyrase subunit B (632 aa).

Positions arginine 419 to proline 533 constitute a Toprim domain. Mg(2+) is bound by residues glutamate 425, aspartate 498, and aspartate 500.

Belongs to the type II topoisomerase GyrB family. In terms of assembly, heterotetramer, composed of two GyrA and two GyrB chains. In the heterotetramer, GyrA contains the active site tyrosine that forms a transient covalent intermediate with DNA, while GyrB binds cofactors and catalyzes ATP hydrolysis. Mg(2+) serves as cofactor. Requires Mn(2+) as cofactor. It depends on Ca(2+) as a cofactor.

Its subcellular location is the cytoplasm. It carries out the reaction ATP-dependent breakage, passage and rejoining of double-stranded DNA.. Its function is as follows. A type II topoisomerase that negatively supercoils closed circular double-stranded (ds) DNA in an ATP-dependent manner to modulate DNA topology and maintain chromosomes in an underwound state. Negative supercoiling favors strand separation, and DNA replication, transcription, recombination and repair, all of which involve strand separation. Also able to catalyze the interconversion of other topological isomers of dsDNA rings, including catenanes and knotted rings. Type II topoisomerases break and join 2 DNA strands simultaneously in an ATP-dependent manner. This Archaeoglobus fulgidus (strain ATCC 49558 / DSM 4304 / JCM 9628 / NBRC 100126 / VC-16) protein is DNA gyrase subunit B.